We begin with the raw amino-acid sequence, 480 residues long: 3-isopropylmalate dehydratase large subunit (480 aa).

Positions 361, 421, and 424 each coordinate [4Fe-4S] cluster.

The protein belongs to the aconitase/IPM isomerase family. LeuC type 1 subfamily. As to quaternary structure, heterodimer of LeuC and LeuD. [4Fe-4S] cluster is required as a cofactor.

It carries out the reaction (2R,3S)-3-isopropylmalate = (2S)-2-isopropylmalate. It functions in the pathway amino-acid biosynthesis; L-leucine biosynthesis; L-leucine from 3-methyl-2-oxobutanoate: step 2/4. Functionally, catalyzes the isomerization between 2-isopropylmalate and 3-isopropylmalate, via the formation of 2-isopropylmaleate. The sequence is that of 3-isopropylmalate dehydratase large subunit from Corynebacterium diphtheriae (strain ATCC 700971 / NCTC 13129 / Biotype gravis).